Consider the following 245-residue polypeptide: tRNA pseudouridine synthase A (245 aa).

The active-site Nucleophile is Asp-52. Tyr-111 lines the substrate pocket.

The protein belongs to the tRNA pseudouridine synthase TruA family. In terms of assembly, homodimer.

It carries out the reaction uridine(38/39/40) in tRNA = pseudouridine(38/39/40) in tRNA. Formation of pseudouridine at positions 38, 39 and 40 in the anticodon stem and loop of transfer RNAs. This Rickettsia africae (strain ESF-5) protein is tRNA pseudouridine synthase A.